The chain runs to 221 residues: N-acetyltransferase 8F1 (221 aa).

Residues 53-73 (LVLVSGSWLLAVVCIFFLLLL) form a helical membrane-spanning segment. The N-acetyltransferase domain maps to 69-219 (FLLLLLRFLA…RTIQLKYPFP (151 aa)).

The protein belongs to the camello family.

The protein localises to the membrane. In terms of biological role, may play a role in regulation of gastrulation. This is N-acetyltransferase 8F1 from Rattus norvegicus (Rat).